We begin with the raw amino-acid sequence, 484 residues long: tRNA sulfurtransferase (484 aa).

Positions 63-167 (EAFAERLACI…NDNLYLIDKR (105 aa)) constitute a THUMP domain. ATP contacts are provided by residues 185-186 (LI), K267, G289, and Q298. C346 and C458 form a disulfide bridge. Residues 406–484 (ISAGEIIIDV…GYNNVKVYRP (79 aa)) enclose the Rhodanese domain. C458 serves as the catalytic Cysteine persulfide intermediate.

It belongs to the ThiI family.

It localises to the cytoplasm. It carries out the reaction [ThiI sulfur-carrier protein]-S-sulfanyl-L-cysteine + a uridine in tRNA + 2 reduced [2Fe-2S]-[ferredoxin] + ATP + H(+) = [ThiI sulfur-carrier protein]-L-cysteine + a 4-thiouridine in tRNA + 2 oxidized [2Fe-2S]-[ferredoxin] + AMP + diphosphate. The enzyme catalyses [ThiS sulfur-carrier protein]-C-terminal Gly-Gly-AMP + S-sulfanyl-L-cysteinyl-[cysteine desulfurase] + AH2 = [ThiS sulfur-carrier protein]-C-terminal-Gly-aminoethanethioate + L-cysteinyl-[cysteine desulfurase] + A + AMP + 2 H(+). It participates in cofactor biosynthesis; thiamine diphosphate biosynthesis. Its function is as follows. Catalyzes the ATP-dependent transfer of a sulfur to tRNA to produce 4-thiouridine in position 8 of tRNAs, which functions as a near-UV photosensor. Also catalyzes the transfer of sulfur to the sulfur carrier protein ThiS, forming ThiS-thiocarboxylate. This is a step in the synthesis of thiazole, in the thiamine biosynthesis pathway. The sulfur is donated as persulfide by IscS. The chain is tRNA sulfurtransferase from Shewanella pealeana (strain ATCC 700345 / ANG-SQ1).